The following is a 449-amino-acid chain: MGTLFGTDGIRGVANRYPMDAPMAFAVGQAVTYVLKKEKHRTRIIIGKDTRISGYMLESALLAGITSMGGNPYLVGVLPTPGIAFITESMRADAGIVISASHNPYQDNGIKIFGGNGFKLSDEQEEVIENLVLDGKLADKVPPVDRMGQAHRIDDVLGRYIVFLKNTFPRELSMEGMKIVMDTANGATYRVAPESFTELGADLDVIHNAPNGININAACGSQHTEDLRKRVVEKGAAIGLAFDGDGDRLIAVDEQGREITGDQILIICGKMLKGKGRLKNDLLVSTVMSNLGLTVACKKYGFRQHAAKVGDRYVLEDMQRLGSVLGGEESGHVIFLDHHTTGDGILTAIQLIAAMLESGKPLSELARLMDVFPQKLINIDVKSKPDISTLPQVVQAVKDVESALGDQGRVLVRYSGTQNMCRVMVEGPSDEITLKYCRQIADVVKAAIG.

Serine 101 acts as the Phosphoserine intermediate in catalysis. Mg(2+)-binding residues include serine 101, aspartate 243, aspartate 245, and aspartate 247. Residue serine 101 is modified to Phosphoserine.

It belongs to the phosphohexose mutase family. Mg(2+) serves as cofactor. Activated by phosphorylation.

The enzyme catalyses alpha-D-glucosamine 1-phosphate = D-glucosamine 6-phosphate. Its function is as follows. Catalyzes the conversion of glucosamine-6-phosphate to glucosamine-1-phosphate. This Syntrophobacter fumaroxidans (strain DSM 10017 / MPOB) protein is Phosphoglucosamine mutase.